The sequence spans 652 residues: uncharacterized protein (652 aa).

Composition is skewed to basic and acidic residues over residues 1–13 (MSVTESKAKTERK) and 641–652 (ATERTDNLADAA). 2 disordered regions span residues 1–21 (MSVTESKAKTERKSSRKPAKT) and 628–652 (VPGWMCAPRPQTDATERTDNLADAA).

This sequence belongs to the ParB family.

This is an uncharacterized protein from Escherichia coli O157:H7.